A 481-amino-acid polypeptide reads, in one-letter code: ATP synthase subunit beta (481 aa).

167-174 contributes to the ATP binding site; the sequence is GGAGVGKT.

This sequence belongs to the ATPase alpha/beta chains family. As to quaternary structure, F-type ATPases have 2 components, CF(1) - the catalytic core - and CF(0) - the membrane proton channel. CF(1) has five subunits: alpha(3), beta(3), gamma(1), delta(1), epsilon(1). CF(0) has three main subunits: a(1), b(2) and c(9-12). The alpha and beta chains form an alternating ring which encloses part of the gamma chain. CF(1) is attached to CF(0) by a central stalk formed by the gamma and epsilon chains, while a peripheral stalk is formed by the delta and b chains.

It localises to the cell membrane. The enzyme catalyses ATP + H2O + 4 H(+)(in) = ADP + phosphate + 5 H(+)(out). Its function is as follows. Produces ATP from ADP in the presence of a proton gradient across the membrane. The catalytic sites are hosted primarily by the beta subunits. The polypeptide is ATP synthase subunit beta (Corynebacterium efficiens (strain DSM 44549 / YS-314 / AJ 12310 / JCM 11189 / NBRC 100395)).